The primary structure comprises 506 residues: UPF0371 protein FN1121 (506 aa).

Belongs to the UPF0371 family.

In Fusobacterium nucleatum subsp. nucleatum (strain ATCC 25586 / DSM 15643 / BCRC 10681 / CIP 101130 / JCM 8532 / KCTC 2640 / LMG 13131 / VPI 4355), this protein is UPF0371 protein FN1121.